We begin with the raw amino-acid sequence, 417 residues long: Neuropeptide FF receptor 2 (417 aa).

Topologically, residues 1-45 (MSEKWDSNSSESWNHIWSGNDTQHHWYSDINITYVNYYLHQPQVA) are extracellular. N-linked (GlcNAc...) asparagine glycans are attached at residues N8, N20, and N31. The helical transmembrane segment at 46-66 (AVFISSYLLIFVLCMVGNTVV) threads the bilayer. Residues 67-82 (CFIVIRNRHMHTVTNF) lie on the Cytoplasmic side of the membrane. Residues 83 to 103 (FILNLAISDLLVGIFCMPITL) traverse the membrane as a helical segment. The Extracellular portion of the chain corresponds to 104–119 (LDNIIAGWPFGSSMCK). C118 and C206 form a disulfide bridge. The chain crosses the membrane as a helical span at residues 120-140 (ISGLVQGISVAASVFTLVAIA). Residues 141–160 (VDRFRCVVYPFKPKLTVKTA) are Cytoplasmic-facing. A helical transmembrane segment spans residues 161–181 (FVTIVIIWGLAIAIMTPSAIM). At 182–217 (LHVQEEKYYRVRLSSHNKTSTVYWCREDWPRHEMRR) the chain is on the extracellular side. The N-linked (GlcNAc...) asparagine glycan is linked to N198. Residues 218–238 (IYTTVLFATIYLAPLSLIVIM) form a helical membrane-spanning segment. The Cytoplasmic portion of the chain corresponds to 239–274 (YARIGASLFKTAAHCTGKQRPVQWHVSKKKQKVIKM). Residues 275 to 295 (LLTVALLFILSWLPLWTLMML) form a helical membrane-spanning segment. Over 296 to 310 (SDYTDLSPNKLRIIN) the chain is Extracellular. A helical membrane pass occupies residues 311 to 331 (IYIYPFAHWLAFCNSSVNPII). Topologically, residues 332 to 417 (YGFFNENFRN…MGEATNSTVA (86 aa)) are cytoplasmic. The interval 382-401 (SQNPGGENLGCGKSADNPTQ) is disordered.

It belongs to the G-protein coupled receptor 1 family.

It localises to the cell membrane. Receptor for NPAF (A-18-F-amide) and NPFF (F-8-F-amide) neuropeptides, also known as morphine-modulating peptides. Can also be activated by a variety of naturally occurring or synthetic FMRF-amide like ligands. This receptor mediates its action by association with G proteins that activate a phosphatidylinositol-calcium second messenger system. The sequence is that of Neuropeptide FF receptor 2 (Npffr2) from Mus musculus (Mouse).